A 714-amino-acid chain; its full sequence is Interferon-induced GTP-binding protein Mx2 (714 aa).

The interval 1–89 is disordered; the sequence is MSMSYRALKF…QRSKGSENNL (89 aa). 2 stretches are compositionally biased toward polar residues: residues 61 to 70 and 79 to 88; these read NNFNQLNLDP and QQRSKGSENN. A Dynamin-type G domain is found at 115 to 386; it reads DLALPAIAVI…LIWHINKSLP (272 aa). Residues 125–132 are G1 motif; that stretch reads GDQSSGKS. 125–132 contributes to the GTP binding site; sequence GDQSSGKS. The segment at 150 to 152 is G2 motif; it reads ITR. The segment at 224–227 is G3 motif; that stretch reads DLPG. GTP-binding positions include 224–228 and 293–296; these read DLPGI and TKPD. Residues 293 to 296 are G4 motif; it reads TKPD. A G5 motif region spans residues 325 to 328; it reads KCRG. The GED domain maps to 622 to 713; sequence IVEIGVHLNA…ALYEFPHFKS (92 aa).

It belongs to the TRAFAC class dynamin-like GTPase superfamily. Dynamin/Fzo/YdjA family.

The protein resides in the cytoplasm. Its subcellular location is the nucleus. Functionally, interferon-induced dynamin-like GTPase with antiviral activity. The polypeptide is Interferon-induced GTP-binding protein Mx2 (MX2) (Ovis aries (Sheep)).